The chain runs to 208 residues: Cytidylate kinase (208 aa).

9 to 17 (GPSASGKSS) provides a ligand contact to ATP.

Belongs to the cytidylate kinase family. Type 1 subfamily.

It is found in the cytoplasm. The catalysed reaction is CMP + ATP = CDP + ADP. The enzyme catalyses dCMP + ATP = dCDP + ADP. The polypeptide is Cytidylate kinase (Thermus thermophilus (strain ATCC BAA-163 / DSM 7039 / HB27)).